The chain runs to 240 residues: MSELSYRRILLKLSGEALMGDGDYGIDPKVINRLAHEVIEAQQAGAQVALVIGGGNIFRGAGLAASGMDRVTGDHMGMLATVINALAMQDALEKLGAKVRVMSAIKINDVCEDFIRRRAIRHLEKGRIAIFAAGTGNPFFTTDSGAALRAIEIGADLLLKATKVDGVYDKDPKKHTDAVRYDSLTYDQVIMQDLEVMDTAAFALARDSDLPLRIFGMSEPGVLLRILHGEQIGTLVQGRS.

12–15 serves as a coordination point for ATP; the sequence is KLSG. Glycine 54 provides a ligand contact to UMP. The ATP site is built by glycine 55 and arginine 59. Residues aspartate 74 and 135–142 contribute to the UMP site; that span reads TGNPFFTT. Positions 162, 168, and 171 each coordinate ATP.

This sequence belongs to the UMP kinase family. As to quaternary structure, homohexamer.

Its subcellular location is the cytoplasm. The enzyme catalyses UMP + ATP = UDP + ADP. Its pathway is pyrimidine metabolism; CTP biosynthesis via de novo pathway; UDP from UMP (UMPK route): step 1/1. With respect to regulation, inhibited by UTP. Its function is as follows. Catalyzes the reversible phosphorylation of UMP to UDP. The polypeptide is Uridylate kinase (Xanthomonas oryzae pv. oryzae (strain KACC10331 / KXO85)).